Here is a 405-residue protein sequence, read N- to C-terminus: MPLYRYKALDAHGEMLDGQMEAANDAEVALRLQEQGHLPVETRLATGENGSPSLRMLLRKKPFDNAALVQFTQQLATLIGAGQPLDRALSILMDLPEDDKSRRVIADIRDTVRGGAPLSVALERQHGLFSKLYINMVRAGEAGGSMQDTLQRLADYLERSRALKGKVINALIYPAILLAVVGCALLFLLGYVVPQFAQMYESLDVALPWFTQAVLSVGLLVRDWWLVLVVIPGVLGLWLDRKRRNAAFRAALDAWLLRQKVIGSLIARLETARLTRTLGTLLRNGVPLLAAIGIARNVMSNTALVEDVAAAADDVKNGHGLSMSLARGKRFPRLALQMIQVGEESGALDTMLLKTADTFELETAQAIDRALAALVPLITLVLASVVGLVIISVLVPLYDLTNAIG.

The Cytoplasmic portion of the chain corresponds to 1 to 169; it reads MPLYRYKALD…SRALKGKVIN (169 aa). Ca(2+) contacts are provided by D98, Q151, and D155. The helical transmembrane segment at 170–190 threads the bilayer; it reads ALIYPAILLAVVGCALLFLLG. Over 191-218 the chain is Periplasmic; the sequence is YVVPQFAQMYESLDVALPWFTQAVLSVG. The chain crosses the membrane as a helical span at residues 219–239; sequence LLVRDWWLVLVVIPGVLGLWL. Topologically, residues 240 to 370 are cytoplasmic; it reads DRKRRNAAFR…LETAQAIDRA (131 aa). A helical membrane pass occupies residues 371–391; the sequence is LAALVPLITLVLASVVGLVII. Residues 392 to 405 lie on the Periplasmic side of the membrane; it reads SVLVPLYDLTNAIG.

Belongs to the GSP F family. As to quaternary structure, type II secretion system is composed of four main components: the outer membrane complex, the inner membrane complex, the cytoplasmic secretion ATPase and the periplasm-spanning pseudopilus. Homodimer. Interacts with XpsE and XpsL components.

It is found in the cell inner membrane. In terms of biological role, component of the type II secretion system inner membrane complex required for the energy-dependent secretion of extracellular factors such as proteases and toxins from the periplasm. This Xanthomonas campestris pv. campestris (strain ATCC 33913 / DSM 3586 / NCPPB 528 / LMG 568 / P 25) protein is Type II secretion system protein F (xpsF).